The primary structure comprises 210 residues: Glutathione S-transferase 3 (210 aa).

In terms of domain architecture, GST N-terminal spans 1-80 (MDFYYLPLSA…YLVEKYGKQN (80 aa)). Residues serine 9, 50-52 (HTI), and 64-66 (ESR) each bind glutathione. The GST C-terminal domain occupies 87-208 (CPKKRALINQ…AGCLEMKKYF (122 aa)).

Belongs to the GST superfamily. Theta family. As to quaternary structure, homodimer.

It catalyses the reaction RX + glutathione = an S-substituted glutathione + a halide anion + H(+). Conjugation of reduced glutathione to a wide number of exogenous and endogenous hydrophobic electrophiles. This is Glutathione S-transferase 3 (Gst3) from Musca domestica (House fly).